An 85-amino-acid polypeptide reads, in one-letter code: Large ribosomal subunit protein bL27 (85 aa).

A disordered region spans residues 1 to 21 (MAHKKAGGSTRNGRDSNAQRL). Residues 9 to 19 (STRNGRDSNAQ) are compositionally biased toward polar residues.

The protein belongs to the bacterial ribosomal protein bL27 family.

This chain is Large ribosomal subunit protein bL27, found in Pectobacterium carotovorum subsp. carotovorum (strain PC1).